Consider the following 395-residue polypeptide: S-adenosylmethionine synthase 3 (395 aa).

Glu10 provides a ligand contact to Mg(2+). His16 contributes to the ATP binding site. Glu44 contributes to the K(+) binding site. Residues Glu57 and Gln100 each coordinate L-methionine. ATP-binding positions include 168–170, 236–239, Asp247, 253–254, Ala270, Lys274, and Lys278; these read DGK, SGRF, and RK. Residue Asp247 coordinates L-methionine. Lys278 serves as a coordination point for L-methionine.

The protein belongs to the AdoMet synthase family. As to quaternary structure, homotetramer. Mn(2+) is required as a cofactor. It depends on Mg(2+) as a cofactor. The cofactor is Co(2+). Requires K(+) as cofactor.

Its subcellular location is the cytoplasm. It catalyses the reaction L-methionine + ATP + H2O = S-adenosyl-L-methionine + phosphate + diphosphate. It participates in amino-acid biosynthesis; S-adenosyl-L-methionine biosynthesis; S-adenosyl-L-methionine from L-methionine: step 1/1. Functionally, catalyzes the formation of S-adenosylmethionine from methionine and ATP. The reaction comprises two steps that are both catalyzed by the same enzyme: formation of S-adenosylmethionine (AdoMet) and triphosphate, and subsequent hydrolysis of the triphosphate. This Populus trichocarpa (Western balsam poplar) protein is S-adenosylmethionine synthase 3 (METK3).